Here is a 275-residue protein sequence, read N- to C-terminus: Large ribosomal subunit protein uL2 (275 aa).

A disordered region spans residues 223–275 (VAMNPVDHPHGGGEGRTSGGRHPVSPWGQPTKGYKTRSNKRTDKYIVRRRNKK).

The protein belongs to the universal ribosomal protein uL2 family. Part of the 50S ribosomal subunit. Forms a bridge to the 30S subunit in the 70S ribosome.

One of the primary rRNA binding proteins. Required for association of the 30S and 50S subunits to form the 70S ribosome, for tRNA binding and peptide bond formation. It has been suggested to have peptidyltransferase activity; this is somewhat controversial. Makes several contacts with the 16S rRNA in the 70S ribosome. The protein is Large ribosomal subunit protein uL2 of Shewanella halifaxensis (strain HAW-EB4).